Reading from the N-terminus, the 185-residue chain is Peptide deformylase (185 aa).

2 residues coordinate Fe cation: C109 and H152. E153 is a catalytic residue. H156 serves as a coordination point for Fe cation.

Belongs to the polypeptide deformylase family. It depends on Fe(2+) as a cofactor.

The enzyme catalyses N-terminal N-formyl-L-methionyl-[peptide] + H2O = N-terminal L-methionyl-[peptide] + formate. Its function is as follows. Removes the formyl group from the N-terminal Met of newly synthesized proteins. Requires at least a dipeptide for an efficient rate of reaction. N-terminal L-methionine is a prerequisite for activity but the enzyme has broad specificity at other positions. This Roseiflexus castenholzii (strain DSM 13941 / HLO8) protein is Peptide deformylase.